Here is a 153-residue protein sequence, read N- to C-terminus: Ubiquitin-conjugating enzyme E2 36 (153 aa).

The 147-residue stretch at 5–151 (NLPRRIIKET…AKEWTRLYAS (147 aa)) folds into the UBC core domain. The active-site Glycyl thioester intermediate is Cys-89.

The protein belongs to the ubiquitin-conjugating enzyme family. As to quaternary structure, interacts with yeast and human Mms2, with the RING domain of RGLG2 and with UEV1A, UEV1B, UEV1C and UEV1D. Ubiquitously expressed at low level.

It catalyses the reaction S-ubiquitinyl-[E1 ubiquitin-activating enzyme]-L-cysteine + [E2 ubiquitin-conjugating enzyme]-L-cysteine = [E1 ubiquitin-activating enzyme]-L-cysteine + S-ubiquitinyl-[E2 ubiquitin-conjugating enzyme]-L-cysteine.. The protein operates within protein modification; protein ubiquitination. In terms of biological role, catalyzes the synthesis of non-canonical poly-ubiquitin chains that are linked through 'Lys-63'. This type of poly-ubiquitination does not lead to protein degradation by the proteasome. Mediates transcriptional activation of target genes. Required for postreplication repair of UV-damaged DNA and for adapting root developmental programs to suboptimal availability of iron. The polypeptide is Ubiquitin-conjugating enzyme E2 36 (UBC36) (Arabidopsis thaliana (Mouse-ear cress)).